Reading from the N-terminus, the 816-residue chain is MAKTNSYKKVIAGTMTAAMVAGVVSPVAAAGKSFPDVPADHWGIDSINYLVEKGAVTGNDKGMFEPGKELTRAEAATMMAQILNLPIDKDAKPSFADSQGQWYTPFIAAVEKAGVIKGTGNGFEPNGKIDRVSMASLLVEAYKLDTKVNGTPATKFKDLETLNWGKEKANILVELGISVGTTADKWEPKKTVTKAEAAQFIAKTDKQFGTEVAKVESAKAVTTQKVEVKFSKAVEKLTKEDVKLANKANNDKVLVKDVKLSEDKKSATVELYSNLAAKQTYTVDVNKVGKVEVTVGSLEAKTIEMADQTVVADEPTALKYTVKDENGTEVVSPAGIEFVTPAAEKINAKGEITLAKGTSTTVKAVYKKDGKVVAESKEVKVSAEGTAVASISNWTVAAEKADFTSKDFKQNDKVYEGDNVSVQVELKDQFNNVVNNVKAEYESLNTEVAVVDKATGKVTVLSAGKAPVKVTVKDSKGKELVSKTVEIEAFAQKAMKEIKLEKTNVALSTKDVTDFKVKAPVLDQYGKEFAAPVEVKVLDKDGKELKEQKLVAKYENKELVLNAHGQEAGKYTVELTAKSGKKEVKSKLALELKAPGVFSKFDVRGLENELDKYVTEENKKNEMVVSVLPVDANGLVLREKEAATLKVTTTDKDGKVVDATSGQVAVNDAAGTITVGNEAKAGETYKVTVVADGKLITTHSFKVVDTAPAAKKLAVDFTSTSLNEVAQGSELKTALLNILSVDGVPATTAGATVTDVKFVSADTNVVSEETAKFGTKGSTSIFVKELTVKKGEQTQKVELDKPVRVDVSIKEVKEVK.

An N-terminal signal peptide occupies residues 1-29 (MAKTNSYKKVIAGTMTAAMVAGVVSPVAA). SLH domains lie at 30-93 (AGKS…DAKP), 94-150 (SFAD…KVNG), and 152-215 (PATK…VAKV). The BIG2 domain maps to 403–480 (FTSKDFKQND…TVKDSKGKEL (78 aa)).

It localises to the secreted. The protein localises to the cell wall. It is found in the S-layer. The S-layer is a paracrystalline mono-layered assembly of proteins which coat the surface of bacteria. This Bacillus thuringiensis subsp. finitimus protein is S-layer protein.